Here is a 316-residue protein sequence, read N- to C-terminus: Thioredoxin reductase (316 aa).

36–43 is a binding site for FAD; the sequence is ERGIPGGQ. Cysteines 135 and 138 form a disulfide. 278 to 287 lines the FAD pocket; sequence DIREKSLRQI.

This sequence belongs to the class-II pyridine nucleotide-disulfide oxidoreductase family. In terms of assembly, homodimer. FAD is required as a cofactor.

It is found in the cytoplasm. It catalyses the reaction [thioredoxin]-dithiol + NADP(+) = [thioredoxin]-disulfide + NADPH + H(+). The protein is Thioredoxin reductase (trxB) of Bacillus subtilis (strain 168).